The chain runs to 491 residues: Glutamyl-tRNA(Gln) amidotransferase subunit A (491 aa).

The active-site Charge relay system is the serine 158. The active-site Acyl-ester intermediate is the serine 182.

It belongs to the amidase family. GatA subfamily. Heterotrimer of A, B and C subunits.

The enzyme catalyses L-glutamyl-tRNA(Gln) + L-glutamine + ATP + H2O = L-glutaminyl-tRNA(Gln) + L-glutamate + ADP + phosphate + H(+). Allows the formation of correctly charged Gln-tRNA(Gln) through the transamidation of misacylated Glu-tRNA(Gln) in organisms which lack glutaminyl-tRNA synthetase. The reaction takes place in the presence of glutamine and ATP through an activated gamma-phospho-Glu-tRNA(Gln). This is Glutamyl-tRNA(Gln) amidotransferase subunit A from Bradyrhizobium diazoefficiens (strain JCM 10833 / BCRC 13528 / IAM 13628 / NBRC 14792 / USDA 110).